The following is a 323-amino-acid chain: Glutamyl-Q tRNA(Asp) synthetase (323 aa).

Residues Arg-5–Thr-9 and Glu-41 each bind L-glutamate. Residues Pro-8–Asn-18 carry the 'HIGH' region motif. Zn(2+) is bound by residues Cys-105, Cys-107, Tyr-129, and Cys-133. L-glutamate contacts are provided by Tyr-193 and Arg-211. The short motif at Arg-249 to Arg-253 is the 'KMSKS' region element. Lys-252 lines the ATP pocket.

Belongs to the class-I aminoacyl-tRNA synthetase family. GluQ subfamily. Zn(2+) is required as a cofactor.

Catalyzes the tRNA-independent activation of glutamate in presence of ATP and the subsequent transfer of glutamate onto a tRNA(Asp). Glutamate is transferred on the 2-amino-5-(4,5-dihydroxy-2-cyclopenten-1-yl) moiety of the queuosine in the wobble position of the QUC anticodon. This Symbiobacterium thermophilum (strain DSM 24528 / JCM 14929 / IAM 14863 / T) protein is Glutamyl-Q tRNA(Asp) synthetase.